Here is a 638-residue protein sequence, read N- to C-terminus: Zinc finger protein 143 (638 aa).

Position 1 is an N-acetylmethionine (Met1). Lys213 participates in a covalent cross-link: Glycyl lysine isopeptide (Lys-Gly) (interchain with G-Cter in SUMO2). C2H2-type zinc fingers lie at residues 237–261 (FRCE…ERSH), 267–291 (YQCE…VRTH), 297–321 (YRCS…IRTH), and 327–351 (FKCP…VRTH). Thr352 carries the post-translational modification Phosphothreonine. 3 consecutive C2H2-type zinc fingers follow at residues 357–381 (YYCT…VRIH), 387–411 (YVCT…HVVH), and 417–440 (YNCN…RTAH). Lys406 is covalently cross-linked (Glycyl lysine isopeptide (Lys-Gly) (interchain with G-Cter in SUMO2)).

The protein belongs to the GLI C2H2-type zinc-finger protein family. As to quaternary structure, interacts with CHD8. Forms a complex with HCFC1 and ZNF143. In terms of tissue distribution, expressed in all tissues tested, with the strongest expression in ovary.

It localises to the nucleus. Its function is as follows. Transcriptional activator. Activates the gene for selenocysteine tRNA (tRNAsec). Binds to the SPH motif of small nuclear RNA (snRNA) gene promoters. Participates in efficient U6 RNA polymerase III transcription via its interaction with CHD8. In complex with HCFC1 and ZNF143, regulates the expression of several genes, including AP2S1, ESCO2, OPHN1, RBL1, UBXN8 and ZNF32. The sequence is that of Zinc finger protein 143 (ZNF143) from Homo sapiens (Human).